Reading from the N-terminus, the 382-residue chain is Serine protease 43 (382 aa).

The N-terminal stretch at 1-27 is a signal peptide; it reads MGGFCGADRGGFLALLVWLQLLQPLFS. The disordered stretch occupies residues 30–97; the sequence is YKPREDSGVM…SGTTTKITLE (68 aa). Polar residues-rich tracts occupy residues 56 to 68 and 85 to 95; these read AQQSRLKSLSISH and GSPSGTTTKIT. Residues 119 to 355 form the Peptidase S1 domain; the sequence is VDPGSLSAGR…YNEWVSYVLS (237 aa). Residues C144 and C160 are joined by a disulfide bond. Residues H159 and D205 each act as charge relay system in the active site. Intrachain disulfides connect C239–C313, C272–C293, and C303–C331. The active-site Charge relay system is the S307. The helical transmembrane segment at 362–382 threads the bilayer; that stretch reads PMGVLVLYLSLVFPLALLVAL.

It belongs to the peptidase S1 family. As to expression, testis-specific. Expressed in germ cells at the stages from late pachytene spermatocytes to spermatids.

It is found in the cell membrane. In terms of biological role, plays a role in spermatogenesis. Involved in germ cell survival during meiosis. Lacks protease activity in vitro. The sequence is that of Serine protease 43 from Mus musculus (Mouse).